We begin with the raw amino-acid sequence, 485 residues long: Pumilio domain-containing protein 6 (485 aa).

2 disordered regions span residues 29 to 48 (NKTH…PYRH) and 55 to 76 (SDLD…TPPP). The span at 55–68 (SDLDNYIFNSGSGS) shows a compositional bias: polar residues. Pumilio repeat units lie at residues 86–124 (EVLL…AVFE), 125–163 (KLTE…ELLR), 164–200 (QMID…QLIQ), 201–236 (ELST…TFFV), 237–279 (HFLS…FRIQ), 287–324 (CIVR…TIID), 326–361 (CLLR…EMME), and 372–411 (ELNR…RQLP). The RNA-binding stretch occupies residues 439-454 (FSSGKKIIDSVMRHGV).

RNA-binding protein that binds to the consensus sequence 5'-CUCUGUAUCUUGU-3' in mRNA 3'-UTRs and modulates mRNA expression and stability. Functions redundantly with puf-5 and puf-7 in oocyte formation and organization, early embryonic cell divisions, and repression of expression of glp-1 and other maternal mRNAs in late oogenesis. This chain is Pumilio domain-containing protein 6, found in Caenorhabditis elegans.